The primary structure comprises 263 residues: NH(3)-dependent NAD(+) synthetase (263 aa).

29–36 contributes to the ATP binding site; that stretch reads GISGGIDS. Aspartate 35 contacts Mg(2+). Arginine 114 provides a ligand contact to deamido-NAD(+). Threonine 134 is an ATP binding site. Position 139 (glutamate 139) interacts with Mg(2+). Deamido-NAD(+) is bound by residues lysine 147 and aspartate 154. The ATP site is built by lysine 163 and serine 185. Deamido-NAD(+) is bound at residue 244–245; it reads HK.

This sequence belongs to the NAD synthetase family. Homodimer.

It catalyses the reaction deamido-NAD(+) + NH4(+) + ATP = AMP + diphosphate + NAD(+) + H(+). Its pathway is cofactor biosynthesis; NAD(+) biosynthesis; NAD(+) from deamido-NAD(+) (ammonia route): step 1/1. Its function is as follows. Catalyzes the ATP-dependent amidation of deamido-NAD to form NAD. Uses ammonia as a nitrogen source. This chain is NH(3)-dependent NAD(+) synthetase, found in Methanococcoides burtonii (strain DSM 6242 / NBRC 107633 / OCM 468 / ACE-M).